We begin with the raw amino-acid sequence, 94 residues long: Small ubiquitin-related modifier 3 (94 aa).

Residue Lys11 forms a Glycyl lysine isopeptide (Lys-Gly) (interchain with G-Cter in SUMO) linkage. One can recognise a Ubiquitin-like domain in the interval 15–92; sequence DHINLKVAGQ…IDVFQQQTGG (78 aa). Residue Gly92 forms a Glycyl lysine isopeptide (Gly-Lys) (interchain with K-? in acceptor proteins) linkage. Residues 93 to 94 constitute a propeptide that is removed on maturation; it reads SC.

This sequence belongs to the ubiquitin family. SUMO subfamily. Interacts with sae2 and ube2i. Covalently attached to a number of proteins. In terms of processing, polymeric chains can be formed through Lys-11 cross-linking. Cleavage of precursor form by a sentrin-specific protease is necessary for function.

Its subcellular location is the cytoplasm. The protein resides in the nucleus. The protein localises to the PML body. In terms of biological role, ubiquitin-like protein which can be covalently attached to target lysines either as a monomer or as a lysine-linked polymer. Does not seem to be involved in protein degradation and may function as an antagonist of ubiquitin in the degradation process. Plays a role in a number of cellular processes such as nuclear transport, DNA replication and repair, mitosis and signal transduction. Covalent attachment to its substrates requires prior activation by the E1 complex sae1-sae2 and linkage to the E2 enzyme ube2i. The chain is Small ubiquitin-related modifier 3 (sumo3) from Danio rerio (Zebrafish).